We begin with the raw amino-acid sequence, 137 residues long: 2-iminobutanoate/2-iminopropanoate deaminase (137 aa).

Position 2 is an N-acetylserine (Ser-2). N6-succinyllysine is present on residues Lys-13 and Lys-67. At Thr-74 the chain carries Phosphothreonine. Ser-136 bears the Phosphoserine mark.

The protein belongs to the RutC family. As to quaternary structure, homotrimer. Interacts with YTHDF2.

It localises to the cytoplasm. Its subcellular location is the nucleus. The protein resides in the peroxisome. It is found in the mitochondrion. It catalyses the reaction 2-iminobutanoate + H2O = 2-oxobutanoate + NH4(+). The enzyme catalyses 2-iminopropanoate + H2O = pyruvate + NH4(+). Its function is as follows. Catalyzes the hydrolytic deamination of enamine/imine intermediates that form during the course of normal metabolism. May facilitate the release of ammonia from these potentially toxic reactive metabolites, reducing their impact on cellular components. It may act on enamine/imine intermediates formed by several types of pyridoxal-5'-phosphate-dependent dehydratases including L-threonine dehydratase. In terms of biological role, also promotes endoribonucleolytic cleavage of some transcripts by promoting recruitment of the ribonuclease P/MRP complex. Acts by bridging YTHDF2 and the ribonuclease P/MRP complex. RIDA/HRSP12 binds to N6-methyladenosine (m6A)-containing mRNAs containing a 5'-GGUUC-3' motif: cooperative binding of RIDA/HRSP12 and YTHDF2 to such transcripts lead to recruitment of the ribonuclease P/MRP complex and subsequent endoribonucleolytic cleavage. This Bos taurus (Bovine) protein is 2-iminobutanoate/2-iminopropanoate deaminase.